Reading from the N-terminus, the 63-residue chain is Large ribosomal subunit protein bL35 (63 aa).

This sequence belongs to the bacterial ribosomal protein bL35 family.

The protein is Large ribosomal subunit protein bL35 of Sulfurimonas denitrificans (strain ATCC 33889 / DSM 1251) (Thiomicrospira denitrificans (strain ATCC 33889 / DSM 1251)).